Here is a 781-residue protein sequence, read N- to C-terminus: Cation channel sperm-associated auxiliary subunit delta (781 aa).

Positions 1–20 (MLVLMLVVATTFRLCPLVKA) are cleaved as a signal peptide. At 21–725 (RPLCRIRTLR…YGAFPLSIFP (705 aa)) the chain is on the extracellular side. 7 disulfide bridges follow: Cys24–Cys370, Cys60–Cys146, Cys145–Cys153, Cys388–Cys497, Cys511–Cys705, Cys526–Cys573, and Cys625–Cys655. Asn231, Asn294, Asn458, Asn473, Asn539, and Asn631 each carry an N-linked (GlcNAc...) asparagine glycan. Residues 726–749 (PEITIVLLTAATLLSIWLAYMIPQ) form a helical membrane-spanning segment. At 750-781 (LLHTEQGLEGNGFWVRLYQRCRKSCACLWGRC) the chain is on the cytoplasmic side.

This sequence belongs to the CATSPERD family. In terms of assembly, component of the CatSper complex or CatSpermasome composed of the core pore-forming members CATSPER1, CATSPER2, CATSPER3 and CATSPER4 as well as auxiliary members CATSPERB, CATSPERG, CATSPERD, CATSPERE, CATSPERZ, C2CD6/CATSPERT, TMEM249, TMEM262 and EFCAB9. HSPA1 may be an additional auxiliary complex member. The core complex members CATSPER1, CATSPER2, CATSPER3 and CATSPER4 form a heterotetrameric channel. The auxiliary CATSPERB, CATSPERG, CATSPERD and CATSPERE subunits form a pavilion-like structure over the pore which stabilizes the complex through interactions with CATSPER4, CATSPER3, CATSPER1 and CATSPER2 respectively. TMEM262/CATSPERH interacts with CATSPERB, further stabilizing the complex. C2CD6/CATSPERT interacts at least with CATSPERD and is required for targeting the CatSper complex in the flagellar membrane.

It is found in the cell projection. It localises to the cilium. The protein resides in the flagellum membrane. Functionally, auxiliary component of the CatSper complex, a complex involved in sperm cell hyperactivation. Sperm cell hyperactivation is needed for sperm motility which is essential late in the preparation of sperm for fertilization. Required for CATSPER1 stability before intraflagellar transport and/or incorporation of the CatSper complex channel into the flagellar membrane. The sequence is that of Cation channel sperm-associated auxiliary subunit delta from Bos taurus (Bovine).